A 363-amino-acid chain; its full sequence is 4-hydroxy-2-oxovalerate aldolase 1 (363 aa).

The Pyruvate carboxyltransferase domain occupies Val13 to Ala265. Substrate is bound at residue Arg21–Asp22. Mn(2+) is bound at residue Asp22. His25 functions as the Proton acceptor in the catalytic mechanism. 2 residues coordinate substrate: Ser175 and His204. Mn(2+)-binding residues include His204 and His206. Tyr295 lines the substrate pocket.

Belongs to the 4-hydroxy-2-oxovalerate aldolase family.

The catalysed reaction is (S)-4-hydroxy-2-oxopentanoate = acetaldehyde + pyruvate. The sequence is that of 4-hydroxy-2-oxovalerate aldolase 1 from Mycobacterium sp. (strain JLS).